Reading from the N-terminus, the 404-residue chain is Starvation-sensing protein RspA (404 aa).

This sequence belongs to the mandelate racemase/muconate lactonizing enzyme family.

Functionally, probably involved in the degradation of homoserine lactone (HSL) or of a metabolite of HSL that signals starvation. This Escherichia coli (strain K12) protein is Starvation-sensing protein RspA.